The following is a 596-amino-acid chain: Delta(24(24(1)))-sterol reductase (596 aa).

The interval 1–122 (MSSRYSLRQT…GHATNGHATS (122 aa)) is disordered. Residues 98-112 (NGNGNGYTNGHGNGN) are compositionally biased toward gly residues. The next 8 helical transmembrane spans lie at 168-188 (FGTA…WIGA), 225-245 (VWAW…LLPG), 269-289 (WSLY…IWPL), 296-316 (FGPL…VAYF), 353-373 (MFFE…GTAA), 381-401 (YVSG…NACA), 419-439 (GFML…HCTI), and 454-474 (GILA…DSCN). NADP(+) is bound by residues Lys477, Arg481, Leu516, and 528 to 529 (HY). A helical membrane pass occupies residues 535-557 (FAVSWGLITGFESPFPWFYPVFF). NADP(+) is bound by residues Asp568, 572–576 (CRRKY), and Tyr583.

It belongs to the ERG4/ERG24 family.

The protein resides in the endoplasmic reticulum membrane. It catalyses the reaction ergosterol + NADP(+) = ergosta-5,7,22,24(28)-tetraen-3beta-ol + NADPH + H(+). It participates in steroid metabolism; ergosterol biosynthesis. Delta(24(24(1)))-sterol reductase; part of the third module of ergosterol biosynthesis pathway that includes the late steps of the pathway. ERG4 catalyzes the last step of ergosterol biosynthesis by converting ergosta-5,7,22,24(28)-tetraen-3beta-ol into ergosterol. The third module or late pathway involves the ergosterol synthesis itself through consecutive reactions that mainly occur in the endoplasmic reticulum (ER) membrane. Firstly, the squalene synthase ERG9 catalyzes the condensation of 2 farnesyl pyrophosphate moieties to form squalene, which is the precursor of all steroids. Squalene synthase is crucial for balancing the incorporation of farnesyl diphosphate (FPP) into sterol and nonsterol isoprene synthesis. Secondly, squalene is converted into lanosterol by the consecutive action of the squalene epoxidase ERG1 and the lanosterol synthase ERG7. Then, the delta(24)-sterol C-methyltransferase ERG6 methylates lanosterol at C-24 to produce eburicol. Eburicol is the substrate of the sterol 14-alpha demethylase encoded by CYP51A, CYP51B and CYP51C, to yield 4,4,24-trimethyl ergosta-8,14,24(28)-trienol. CYP51B encodes the enzyme primarily responsible for sterol 14-alpha-demethylation, and plays an essential role in ascospore formation. CYP51A encodes an additional sterol 14-alpha-demethylase, induced on ergosterol depletion and responsible for the intrinsic variation in azole sensitivity. The third CYP51 isoform, CYP51C, does not encode a sterol 14-alpha-demethylase, but is required for full virulence on host wheat ears. The C-14 reductase ERG24 then reduces the C14=C15 double bond which leads to 4,4-dimethylfecosterol. A sequence of further demethylations at C-4, involving the C-4 demethylation complex containing the C-4 methylsterol oxidases ERG25, the sterol-4-alpha-carboxylate 3-dehydrogenase ERG26 and the 3-keto-steroid reductase ERG27, leads to the production of fecosterol via 4-methylfecosterol. ERG28 has a role as a scaffold to help anchor ERG25, ERG26 and ERG27 to the endoplasmic reticulum. The C-8 sterol isomerase ERG2 then catalyzes the reaction which results in unsaturation at C-7 in the B ring of sterols and thus converts fecosterol to episterol. The sterol-C5-desaturases ERG3A and ERG3BB then catalyze the introduction of a C-5 double bond in the B ring to produce 5-dehydroepisterol. The C-22 sterol desaturases ERG5A and ERG5B further convert 5-dehydroepisterol into ergosta-5,7,22,24(28)-tetraen-3beta-ol by forming the C-22(23) double bond in the sterol side chain. Finally, ergosta-5,7,22,24(28)-tetraen-3beta-ol is substrate of the C-24(28) sterol reductase ERG4 to produce ergosterol. The protein is Delta(24(24(1)))-sterol reductase of Gibberella zeae (strain ATCC MYA-4620 / CBS 123657 / FGSC 9075 / NRRL 31084 / PH-1) (Wheat head blight fungus).